A 286-amino-acid polypeptide reads, in one-letter code: Thymidylate synthase (286 aa).

A dUMP-binding site is contributed by 140–141 (RR). Residue C161 is the Nucleophile of the active site. Residues 185–188 (RSND), N196, and 226–228 (HIY) each bind dUMP. Residue D188 coordinates (6R)-5,10-methylene-5,6,7,8-tetrahydrofolate. A285 lines the (6R)-5,10-methylene-5,6,7,8-tetrahydrofolate pocket.

Belongs to the thymidylate synthase family. Bacterial-type ThyA subfamily. As to quaternary structure, homodimer.

The protein resides in the cytoplasm. It catalyses the reaction dUMP + (6R)-5,10-methylene-5,6,7,8-tetrahydrofolate = 7,8-dihydrofolate + dTMP. The protein operates within pyrimidine metabolism; dTTP biosynthesis. Functionally, catalyzes the reductive methylation of 2'-deoxyuridine-5'-monophosphate (dUMP) to 2'-deoxythymidine-5'-monophosphate (dTMP) while utilizing 5,10-methylenetetrahydrofolate (mTHF) as the methyl donor and reductant in the reaction, yielding dihydrofolate (DHF) as a by-product. This enzymatic reaction provides an intracellular de novo source of dTMP, an essential precursor for DNA biosynthesis. In Streptococcus thermophilus (strain ATCC BAA-491 / LMD-9), this protein is Thymidylate synthase.